A 235-amino-acid chain; its full sequence is Cytochrome c-554 (235 aa).

The N-terminal stretch at Met1–Ala24 is a signal peptide. Heme is bound by residues Cys35, Cys38, His39, His51, Cys84, Cys87, His88, Cys112, Cys115, His116, His126, Cys158, Cys161, His162, and His203. Residues Asn121–Asp144 form a disordered region.

Post-translationally, binds 4 heme groups per subunit.

The protein localises to the periplasm. In terms of biological role, involved in ammonia oxidation; accepts electrons directly from hydroxylamine oxidoreductase (HAO). The sequence is that of Cytochrome c-554 (cycA1) from Nitrosomonas europaea (strain ATCC 19718 / CIP 103999 / KCTC 2705 / NBRC 14298).